A 282-amino-acid polypeptide reads, in one-letter code: Prohibitin-1 (282 aa).

The AIM signature appears at 106-109; sequence YQNL.

The protein belongs to the prohibitin family. The mitochondrial prohibitin complex consists of two subunits (phb1 and phb2). The subunits assemble into a membrane-associated ring-shaped supercomplex of approximately 1 mDa.

Its subcellular location is the mitochondrion inner membrane. The protein resides in the cytoplasm. Prohibitin probably acts as a holdase/unfoldase for the stabilization of newly synthesized mitochondrial proteins. Involved in mitophagy; may act as an adapter for atg8 that supports mitophagosome assembly. Negatively regulates the proteolytic processing of atg32 via the i-AAA protease. Acts as a negative regulator of the m-AAA protease. In Schizosaccharomyces pombe (strain 972 / ATCC 24843) (Fission yeast), this protein is Prohibitin-1 (phb1).